The primary structure comprises 141 residues: Mite group 2 allergen Tyr p 2 (141 aa).

An N-terminal signal peptide occupies residues 1 to 15 (MKFLILFALVAVAAA). 3 disulfide bridges follow: Cys-23–Cys-132, Cys-36–Cys-41, and Cys-87–Cys-92. Asn-103 is a glycosylation site (N-linked (GlcNAc...) asparagine).

This sequence belongs to the NPC2 family.

It is found in the secreted. This Tyrophagus putrescentiae (Mold mite) protein is Mite group 2 allergen Tyr p 2.